The following is a 363-amino-acid chain: 3-isopropylmalate dehydrogenase (363 aa).

79-92 (GPKWEHLPPNDQPE) provides a ligand contact to NAD(+). Substrate-binding residues include Arg100, Arg110, Arg139, and Asp228. 3 residues coordinate Mg(2+): Asp228, Asp252, and Asp256. An NAD(+)-binding site is contributed by 286–298 (GSAPDIAGKNIAN).

Belongs to the isocitrate and isopropylmalate dehydrogenases family. LeuB type 1 subfamily. Homodimer. The cofactor is Mg(2+). Requires Mn(2+) as cofactor.

The protein localises to the cytoplasm. The catalysed reaction is (2R,3S)-3-isopropylmalate + NAD(+) = 4-methyl-2-oxopentanoate + CO2 + NADH. It participates in amino-acid biosynthesis; L-leucine biosynthesis; L-leucine from 3-methyl-2-oxobutanoate: step 3/4. Its function is as follows. Catalyzes the oxidation of 3-carboxy-2-hydroxy-4-methylpentanoate (3-isopropylmalate) to 3-carboxy-4-methyl-2-oxopentanoate. The product decarboxylates to 4-methyl-2 oxopentanoate. The polypeptide is 3-isopropylmalate dehydrogenase (Vibrio vulnificus (strain CMCP6)).